A 600-amino-acid polypeptide reads, in one-letter code: CDK5RAP1-like protein (600 aa).

The segment at 45–66 (LSSAAHPPPPPPRRLARSGPSR) is disordered. Residues 93–222 (GRIYHETYGC…LPRLLQEVDY (130 aa)) enclose the MTTase N-terminal domain. Residues cysteine 102, cysteine 139, cysteine 185, cysteine 260, cysteine 264, and cysteine 267 each contribute to the [4Fe-4S] cluster site. The 256-residue stretch at 246-501 (SDNSVTAFVS…ISTFRETTAK (256 aa)) folds into the Radical SAM core domain. Positions 504 to 580 (DSQVGTVQLV…TASLSGDVIA (77 aa)) constitute a TRAM domain.

The protein belongs to the methylthiotransferase family. MiaB subfamily. It depends on [4Fe-4S] cluster as a cofactor.

Its function is as follows. Potential regulator of CDK5 activity. The polypeptide is CDK5RAP1-like protein (Oryza sativa subsp. japonica (Rice)).